The sequence spans 121 residues: MPRYELALILKAMQRPETAAVLKRTVEALMERGAIVRNLENLGERALPYKISKHNHRHRRGGYFLVDLEGPPSIVSTMMDHLGRDIDIIRRAFIKYPVSKTEECSGIVPVNCEDKLIPKKK.

It belongs to the bacterial ribosomal protein bS6 family. In terms of assembly, component of the mitochondrial ribosome small subunit (28S) which comprises a 12S rRNA and about 30 distinct proteins.

The protein localises to the mitochondrion. This chain is Small ribosomal subunit protein bS6m (MRPS6), found in Gallus gallus (Chicken).